Here is a 384-residue protein sequence, read N- to C-terminus: 1-deoxy-D-xylulose 5-phosphate reductoisomerase (384 aa).

Residues Thr10, Gly11, Ser12, Ile13, Gly36, and Asn122 each contribute to the NADPH site. Position 123 (Lys123) interacts with 1-deoxy-D-xylulose 5-phosphate. Glu124 provides a ligand contact to NADPH. Asp148 is a binding site for Mn(2+). Residues Ser149, Glu150, Ser174, and His197 each coordinate 1-deoxy-D-xylulose 5-phosphate. Glu150 is a Mn(2+) binding site. Gly203 serves as a coordination point for NADPH. The 1-deoxy-D-xylulose 5-phosphate site is built by Ser210, Asn215, Lys216, and Glu219. Glu219 lines the Mn(2+) pocket.

The protein belongs to the DXR family. Mg(2+) serves as cofactor. Mn(2+) is required as a cofactor.

It catalyses the reaction 2-C-methyl-D-erythritol 4-phosphate + NADP(+) = 1-deoxy-D-xylulose 5-phosphate + NADPH + H(+). The protein operates within isoprenoid biosynthesis; isopentenyl diphosphate biosynthesis via DXP pathway; isopentenyl diphosphate from 1-deoxy-D-xylulose 5-phosphate: step 1/6. Catalyzes the NADPH-dependent rearrangement and reduction of 1-deoxy-D-xylulose-5-phosphate (DXP) to 2-C-methyl-D-erythritol 4-phosphate (MEP). This chain is 1-deoxy-D-xylulose 5-phosphate reductoisomerase, found in Chlorobium phaeobacteroides (strain DSM 266 / SMG 266 / 2430).